Reading from the N-terminus, the 349-residue chain is Aminomethyltransferase (349 aa).

It belongs to the GcvT family. In terms of assembly, the glycine cleavage system is composed of four proteins: P, T, L and H.

It catalyses the reaction N(6)-[(R)-S(8)-aminomethyldihydrolipoyl]-L-lysyl-[protein] + (6S)-5,6,7,8-tetrahydrofolate = N(6)-[(R)-dihydrolipoyl]-L-lysyl-[protein] + (6R)-5,10-methylene-5,6,7,8-tetrahydrofolate + NH4(+). The glycine cleavage system catalyzes the degradation of glycine. This is Aminomethyltransferase from Thermus thermophilus (strain ATCC BAA-163 / DSM 7039 / HB27).